A 160-amino-acid chain; its full sequence is Phosphopantetheine adenylyltransferase (160 aa).

Thr-10 contacts substrate. ATP is bound by residues 10–11 and His-18; that span reads TF. Lys-42, Leu-74, and Arg-88 together coordinate substrate. Residues 89–91, Glu-99, and 124–130 contribute to the ATP site; these read GLR and NSFISST.

Belongs to the bacterial CoaD family. As to quaternary structure, homohexamer. Mg(2+) serves as cofactor.

The protein localises to the cytoplasm. The catalysed reaction is (R)-4'-phosphopantetheine + ATP + H(+) = 3'-dephospho-CoA + diphosphate. The protein operates within cofactor biosynthesis; coenzyme A biosynthesis; CoA from (R)-pantothenate: step 4/5. Reversibly transfers an adenylyl group from ATP to 4'-phosphopantetheine, yielding dephospho-CoA (dPCoA) and pyrophosphate. In Aeromonas hydrophila subsp. hydrophila (strain ATCC 7966 / DSM 30187 / BCRC 13018 / CCUG 14551 / JCM 1027 / KCTC 2358 / NCIMB 9240 / NCTC 8049), this protein is Phosphopantetheine adenylyltransferase.